Consider the following 453-residue polypeptide: Exodeoxyribonuclease 7 large subunit (453 aa).

This sequence belongs to the XseA family. Heterooligomer composed of large and small subunits.

Its subcellular location is the cytoplasm. It catalyses the reaction Exonucleolytic cleavage in either 5'- to 3'- or 3'- to 5'-direction to yield nucleoside 5'-phosphates.. Bidirectionally degrades single-stranded DNA into large acid-insoluble oligonucleotides, which are then degraded further into small acid-soluble oligonucleotides. The chain is Exodeoxyribonuclease 7 large subunit from Geobacter metallireducens (strain ATCC 53774 / DSM 7210 / GS-15).